Here is a 619-residue protein sequence, read N- to C-terminus: Protein Atg16l2 (619 aa).

Positions 57–78 are disordered; the sequence is LQPEPNSVTPTTHQGPWEESEL. The segment covering 60–70 has biased composition (polar residues); the sequence is EPNSVTPTTHQ. The stretch at 116-227 forms a coiled coil; it reads AALGTLESEL…QARVSQELKK (112 aa). WD repeat units lie at residues 334-373, 378-417, 420-454, 455-498, 500-539, 546-585, and 589-619; these read AHLS…LEAN, GAGG…SKET, GHKD…LGRA, YCSR…CTQV, PVQG…IRQV, KCGS…LESR, and PHCA…VLWQ.

The protein belongs to the WD repeat ATG16 family. Homooligomer. Heterooligomer with ATG16L1. Interacts with ATG5. Self-oligomerizes to form a 800-kDa complex composed of ATG12-ATG5 and ATG16L2. Interacts with RAB33B.

Its subcellular location is the cytoplasm. The protein resides in the cytosol. May play a role in regulating epithelial homeostasis in an ATG16L1-dependent manner. The polypeptide is Protein Atg16l2 (ATG16L2) (Homo sapiens (Human)).